A 147-amino-acid polypeptide reads, in one-letter code: Cyanate hydratase (147 aa).

Residues Arg-88, Glu-91, and Ser-114 contribute to the active site.

This sequence belongs to the cyanase family.

The enzyme catalyses cyanate + hydrogencarbonate + 3 H(+) = NH4(+) + 2 CO2. Functionally, catalyzes the reaction of cyanate with bicarbonate to produce ammonia and carbon dioxide. This chain is Cyanate hydratase, found in Acaryochloris marina (strain MBIC 11017).